A 227-amino-acid polypeptide reads, in one-letter code: Small ribosomal subunit protein uS3 (227 aa).

The KH type-2 domain maps to 24 to 94 (LDEYLEEELG…RVSIEVKELP (71 aa)). The segment at 207–227 (EEVEDELKELIGKSEDEAEGA) is disordered.

The protein belongs to the universal ribosomal protein uS3 family. As to quaternary structure, part of the 30S ribosomal subunit.

Functionally, binds the lower part of the 30S subunit head. In Methanopyrus kandleri (strain AV19 / DSM 6324 / JCM 9639 / NBRC 100938), this protein is Small ribosomal subunit protein uS3.